The primary structure comprises 452 residues: Bifunctional protein GlmU (452 aa).

A pyrophosphorylase region spans residues 1–224; sequence MNIVILAAGM…VWETHGVNSK (224 aa). Residues 6 to 9, Lys20, Gln71, 76 to 77, 98 to 100, Gly135, Glu149, Asn164, and Asn222 contribute to the UDP-N-acetyl-alpha-D-glucosamine site; these read LAAG, GT, and YGD. Position 100 (Asp100) interacts with Mg(2+). Residue Asn222 participates in Mg(2+) binding. The tract at residues 225-245 is linker; the sequence is VQLAELERVHQNNIARALLEH. The segment at 246-452 is N-acetyltransferase; sequence GVTLADPARI…GWQRPVKIKK (207 aa). Residues Arg328 and Lys346 each coordinate UDP-N-acetyl-alpha-D-glucosamine. Residue His358 is the Proton acceptor of the active site. Residues Tyr361 and Asn372 each coordinate UDP-N-acetyl-alpha-D-glucosamine. Acetyl-CoA contacts are provided by residues Ala375, 381–382, Ser400, Ala418, and Arg435; that span reads NY.

It in the N-terminal section; belongs to the N-acetylglucosamine-1-phosphate uridyltransferase family. This sequence in the C-terminal section; belongs to the transferase hexapeptide repeat family. In terms of assembly, homotrimer. The cofactor is Mg(2+).

It localises to the cytoplasm. It carries out the reaction alpha-D-glucosamine 1-phosphate + acetyl-CoA = N-acetyl-alpha-D-glucosamine 1-phosphate + CoA + H(+). The enzyme catalyses N-acetyl-alpha-D-glucosamine 1-phosphate + UTP + H(+) = UDP-N-acetyl-alpha-D-glucosamine + diphosphate. It participates in nucleotide-sugar biosynthesis; UDP-N-acetyl-alpha-D-glucosamine biosynthesis; N-acetyl-alpha-D-glucosamine 1-phosphate from alpha-D-glucosamine 6-phosphate (route II): step 2/2. Its pathway is nucleotide-sugar biosynthesis; UDP-N-acetyl-alpha-D-glucosamine biosynthesis; UDP-N-acetyl-alpha-D-glucosamine from N-acetyl-alpha-D-glucosamine 1-phosphate: step 1/1. It functions in the pathway bacterial outer membrane biogenesis; LPS lipid A biosynthesis. In terms of biological role, catalyzes the last two sequential reactions in the de novo biosynthetic pathway for UDP-N-acetylglucosamine (UDP-GlcNAc). The C-terminal domain catalyzes the transfer of acetyl group from acetyl coenzyme A to glucosamine-1-phosphate (GlcN-1-P) to produce N-acetylglucosamine-1-phosphate (GlcNAc-1-P), which is converted into UDP-GlcNAc by the transfer of uridine 5-monophosphate (from uridine 5-triphosphate), a reaction catalyzed by the N-terminal domain. The sequence is that of Bifunctional protein GlmU from Herminiimonas arsenicoxydans.